The primary structure comprises 543 residues: Chaperonin GroEL (543 aa).

ATP-binding positions include 29 to 32 (TLGP), 86 to 90 (DGTTT), G413, 476 to 478 (NAA), and D492.

This sequence belongs to the chaperonin (HSP60) family. As to quaternary structure, forms a cylinder of 14 subunits composed of two heptameric rings stacked back-to-back. Interacts with the co-chaperonin GroES.

It localises to the cytoplasm. The enzyme catalyses ATP + H2O + a folded polypeptide = ADP + phosphate + an unfolded polypeptide.. In terms of biological role, together with its co-chaperonin GroES, plays an essential role in assisting protein folding. The GroEL-GroES system forms a nano-cage that allows encapsulation of the non-native substrate proteins and provides a physical environment optimized to promote and accelerate protein folding. The polypeptide is Chaperonin GroEL (Streptococcus pyogenes serotype M1).